A 429-amino-acid polypeptide reads, in one-letter code: Glutamate-1-semialdehyde 2,1-aminomutase (429 aa).

N6-(pyridoxal phosphate)lysine is present on lysine 266.

It belongs to the class-III pyridoxal-phosphate-dependent aminotransferase family. HemL subfamily. It depends on pyridoxal 5'-phosphate as a cofactor.

It localises to the cytoplasm. It carries out the reaction (S)-4-amino-5-oxopentanoate = 5-aminolevulinate. The protein operates within porphyrin-containing compound metabolism; protoporphyrin-IX biosynthesis; 5-aminolevulinate from L-glutamyl-tRNA(Glu): step 2/2. The polypeptide is Glutamate-1-semialdehyde 2,1-aminomutase (hemL) (Aeropyrum pernix (strain ATCC 700893 / DSM 11879 / JCM 9820 / NBRC 100138 / K1)).